Here is an 85-residue protein sequence, read N- to C-terminus: UPF0297 protein CHY_0540 (85 aa).

This sequence belongs to the UPF0297 family.

This is UPF0297 protein CHY_0540 from Carboxydothermus hydrogenoformans (strain ATCC BAA-161 / DSM 6008 / Z-2901).